A 240-amino-acid polypeptide reads, in one-letter code: Uridylate kinase (240 aa).

12-15 (KLSG) contributes to the ATP binding site. The tract at residues 20–25 (GEQGNG) is involved in allosteric activation by GTP. Glycine 54 lines the UMP pocket. Residues glycine 55 and arginine 59 each contribute to the ATP site. UMP contacts are provided by residues aspartate 74 and 135–142 (TGNPYFST). ATP-binding residues include asparagine 163, tyrosine 169, and aspartate 172.

Belongs to the UMP kinase family. Homohexamer. Interacts with BrxC.

The protein localises to the cytoplasm. The catalysed reaction is UMP + ATP = UDP + ADP. The protein operates within pyrimidine metabolism; CTP biosynthesis via de novo pathway; UDP from UMP (UMPK route): step 1/1. With respect to regulation, allosterically activated by GTP. Can also be activated by dGTP and 3'-anthraniloyl-2'-deoxyguanosine-5'-triphosphate (Ant-dGTP). Inhibited by UTP, 5-bromo-UTP and 5-iodo-UTP. Catalyzes the reversible phosphorylation of UMP to UDP, with ATP or dATP as the most efficient phosphate donors. Is also able to phosphorylate 5-fluoro-UMP and 6-aza-UMP. The chain is Uridylate kinase (pyrH) from Bacillus subtilis (strain 168).